The following is a 410-amino-acid chain: Peptidase T (410 aa).

His-79 provides a ligand contact to Zn(2+). Residue Asp-81 is part of the active site. Asp-142 contributes to the Zn(2+) binding site. The active-site Proton acceptor is the Glu-176. The Zn(2+) site is built by Glu-177, Asp-199, and His-381.

Belongs to the peptidase M20B family. The cofactor is Zn(2+).

It localises to the cytoplasm. The enzyme catalyses Release of the N-terminal residue from a tripeptide.. Functionally, cleaves the N-terminal amino acid of tripeptides. The sequence is that of Peptidase T from Listeria welshimeri serovar 6b (strain ATCC 35897 / DSM 20650 / CCUG 15529 / CIP 8149 / NCTC 11857 / SLCC 5334 / V8).